A 451-amino-acid chain; its full sequence is Rab GDP-dissociation inhibitor (451 aa).

Interaction with YPT1 regions lie at residues 106-112 and 234-259; these read RYVDFKQ and YPMYGLGELPQGFARLSAIYGGTYML.

It belongs to the Rab GDI family. Interacts with the GDP-bound form of Rab GTPase YPT1. Interacts with YPT10.

Its subcellular location is the cytoplasm. In terms of biological role, regulates the GDP/GTP exchange reaction of SEC4 by inhibiting the dissociation of GDP from it, and the subsequent binding of GTP to SEC4. Plays an essential role in the yeast secretory pathway. Extracts GDP-bound YPT7 from vacuolar membranes, antagonizing vacuolar membrane fusion. In Saccharomyces cerevisiae (strain ATCC 204508 / S288c) (Baker's yeast), this protein is Rab GDP-dissociation inhibitor (GDI1).